The primary structure comprises 164 residues: Cold-inducible RNA-binding protein (164 aa).

The RRM domain occupies 6-84 (GKLFVGGLSF…RQIRVDQAGK (79 aa)). A disordered region spans residues 65 to 164 (AGMNGKTVDG…SYRDSYDSYG (100 aa)). The span at 93–118 (YRGGSSGGGRGFFRGGRGRGGGGYGG) shows a compositional bias: gly residues. Basic and acidic residues predominate over residues 155–164 (SYRDSYDSYG).

Interacts with prmt1. Interacts with elavl1/elrA (via RRM3). Associates with ribosomes. Methylated on arginine residues within RGG motifs. Methylation by prmt1 promotes cytoplasmic accumulation.

It is found in the nucleus. The protein localises to the nucleoplasm. It localises to the cytoplasm. Functionally, cold-inducible mRNA binding protein. Acts cooperatively with elavl1/elrA to stabilize AU-rich element (ARE)-containing mRNAs by binding to them and inhibiting their deadenylation. Essential for embryonic gastrulation and neural development, acting to maintain the expression of a set of adhesion molecules, and cell movement during embryogenesis. Required for pronephros development. May play a role in hibernation. This Aquarana catesbeiana (American bullfrog) protein is Cold-inducible RNA-binding protein.